The following is a 504-amino-acid chain: MKCTVTAKESGLVNADILVQFFSKKEMKRDAGKVLAGLGVVASPDGDFKASAGEIAMLYRQASGKEASRVILAGVGEGKTAEDYRKAADSVARKTVDLHLGVLALDCSPIDDWAKQSKQKPEELAAILVEGVLSGAYRFDRLKSGKLDKEETKEDKPKNIEELVLAGCGSRLEAIEKGAGKGMIIGACQNRARDLVNLPGNHLSAEDLAEAAIEAGKRGGFEVTVFDKKKIVELGMGGLLAVNKGSEQPPTFVILDYKPKGKAKKTIALVGKGVTFDSGGISLKPAQGMDEMKSDMSGAAVVIAAIEAAASLGLPLRVVGLVPATDNMPGGSAQKPGDVITTMSGITVEVGNTDAEGRLILADALFYAKKEYNPDVIIDLATLTGACIVALGNSVAGLFSNDEKLAESIFEAGQSSGEKVWRLPLWDEYDELIKSDVADVHNTGGRGAGTITAAKFLEKFIDGHKHWAHIDIAGPAFWAKGGSKTPGATGFGVRLLLDLLKGWS.

Mn(2+) is bound by residues K272 and D277. K284 is an active-site residue. The Mn(2+) site is built by D295, D354, and E356. The active site involves R358.

It belongs to the peptidase M17 family. Mn(2+) is required as a cofactor.

It is found in the cytoplasm. It catalyses the reaction Release of an N-terminal amino acid, Xaa-|-Yaa-, in which Xaa is preferably Leu, but may be other amino acids including Pro although not Arg or Lys, and Yaa may be Pro. Amino acid amides and methyl esters are also readily hydrolyzed, but rates on arylamides are exceedingly low.. It carries out the reaction Release of an N-terminal amino acid, preferentially leucine, but not glutamic or aspartic acids.. Functionally, presumably involved in the processing and regular turnover of intracellular proteins. Catalyzes the removal of unsubstituted N-terminal amino acids from various peptides. The sequence is that of Probable cytosol aminopeptidase from Chlorobaculum tepidum (strain ATCC 49652 / DSM 12025 / NBRC 103806 / TLS) (Chlorobium tepidum).